We begin with the raw amino-acid sequence, 319 residues long: Probable cystathionine gamma-synthase (319 aa).

Lysine 197 bears the N6-(pyridoxal phosphate)lysine mark.

It belongs to the trans-sulfuration enzymes family. Homotetramer. Requires pyridoxal 5'-phosphate as cofactor.

Its subcellular location is the cytoplasm. It catalyses the reaction O-succinyl-L-homoserine + L-cysteine = L,L-cystathionine + succinate + H(+). Catalyzes the formation of L-cystathionine from O-succinyl-L-homoserine (OSHS) and L-cysteine, via a gamma-replacement reaction. In the absence of thiol, catalyzes gamma-elimination to form 2-oxobutanoate, succinate and ammonia. The protein is Probable cystathionine gamma-synthase (metB) of Herpetosiphon aurantiacus (Herpetosiphon giganteus).